A 408-amino-acid chain; its full sequence is MQIKALSVSEVNQYMKRILGSDPILSHIYVKGEISNYRLHSSGHMYFTLKDKNSKISCVMFKGNCEKLKFFPEEGMSLVCKGYVSIYEKDGQVQLYVNDMEPSGIGALHLAFQQLKDRLNKEGLFDTKYKQEIPLIPRRIALITSPTGAAIRDMVSIILRRFPQVELCIFPVLVQGEGAVETIVKAIELCNRYPGIDLAIVGRGGGSIEELWAFNEEKVARAIFNSRVPIISAVGHETDFTISDFVADLRAATPSSAAELAVPNRVELREYIDSMEKRMIHLMKTKLNTSYQKLSFIENSYFFRYPLNPIYDKQQYINDLLQKIKSAINVKKQFNHRHLKYLGERLHSLSPLSIFSRGYSIVRNSEGSIVKSTDHVQVDERLCIDVIDGEINCKVIECKKEEKILGKY.

This sequence belongs to the XseA family. As to quaternary structure, heterooligomer composed of large and small subunits.

Its subcellular location is the cytoplasm. The enzyme catalyses Exonucleolytic cleavage in either 5'- to 3'- or 3'- to 5'-direction to yield nucleoside 5'-phosphates.. In terms of biological role, bidirectionally degrades single-stranded DNA into large acid-insoluble oligonucleotides, which are then degraded further into small acid-soluble oligonucleotides. The protein is Exodeoxyribonuclease 7 large subunit of Alkaliphilus oremlandii (strain OhILAs) (Clostridium oremlandii (strain OhILAs)).